The chain runs to 223 residues: Putative germin-like protein 2-3 (223 aa).

The signal sequence occupies residues 1 to 28; the sequence is MAAIRASFLLAAAALLALWCSDHGGVVA. A disulfide bridge connects residues Cys38 and Cys53. In terms of domain architecture, Cupin type-1 spans 67–217; sequence SGLHMAGNTT…AFQVEKTVVD (151 aa). An N-linked (GlcNAc...) asparagine glycan is attached at Asn74. Residues His115, His117, Glu122, and His163 each coordinate Mn(2+).

It belongs to the germin family. Oligomer (believed to be a pentamer but probably hexamer).

It localises to the secreted. Its subcellular location is the extracellular space. It is found in the apoplast. Functionally, may play a role in plant defense. Probably has no oxalate oxidase activity even if the active site is conserved. The polypeptide is Putative germin-like protein 2-3 (Oryza sativa subsp. japonica (Rice)).